The following is a 782-amino-acid chain: Endonuclease MutS2 (782 aa).

336-343 (GPNTGGKT) is an ATP binding site. Residues 707 to 782 (LDLRGYRYEE…GFGVTVAELK (76 aa)) enclose the Smr domain.

This sequence belongs to the DNA mismatch repair MutS family. MutS2 subfamily. As to quaternary structure, homodimer. Binds to stalled ribosomes, contacting rRNA.

Endonuclease that is involved in the suppression of homologous recombination and thus may have a key role in the control of bacterial genetic diversity. Its function is as follows. Acts as a ribosome collision sensor, splitting the ribosome into its 2 subunits. Detects stalled/collided 70S ribosomes which it binds and splits by an ATP-hydrolysis driven conformational change. Acts upstream of the ribosome quality control system (RQC), a ribosome-associated complex that mediates the extraction of incompletely synthesized nascent chains from stalled ribosomes and their subsequent degradation. Probably generates substrates for RQC. This chain is Endonuclease MutS2, found in Staphylococcus carnosus (strain TM300).